The primary structure comprises 72 residues: Translation initiation factor IF-1 (72 aa).

The S1-like domain maps to 2-72; that stretch reads AKDDVIEVDG…TRGRITYRFK (71 aa).

It belongs to the IF-1 family. As to quaternary structure, component of the 30S ribosomal translation pre-initiation complex which assembles on the 30S ribosome in the order IF-2 and IF-3, IF-1 and N-formylmethionyl-tRNA(fMet); mRNA recruitment can occur at any time during PIC assembly.

The protein resides in the cytoplasm. Functionally, one of the essential components for the initiation of protein synthesis. Stabilizes the binding of IF-2 and IF-3 on the 30S subunit to which N-formylmethionyl-tRNA(fMet) subsequently binds. Helps modulate mRNA selection, yielding the 30S pre-initiation complex (PIC). Upon addition of the 50S ribosomal subunit IF-1, IF-2 and IF-3 are released leaving the mature 70S translation initiation complex. The chain is Translation initiation factor IF-1 from Lactococcus lactis subsp. lactis (strain IL1403) (Streptococcus lactis).